A 99-amino-acid chain; its full sequence is Large ribosomal subunit protein uL23c (99 aa).

The protein belongs to the universal ribosomal protein uL23 family. In terms of assembly, part of the 50S ribosomal subunit.

It localises to the plastid. It is found in the chloroplast. Functionally, binds to 23S rRNA. The protein is Large ribosomal subunit protein uL23c (rpl23) of Emiliania huxleyi (Coccolithophore).